The sequence spans 189 residues: Large ribosomal subunit protein uL5 (189 aa).

Belongs to the universal ribosomal protein uL5 family. Part of the 50S ribosomal subunit; part of the 5S rRNA/L5/L18/L25 subcomplex. Contacts the 5S rRNA and the P site tRNA. Forms a bridge to the 30S subunit in the 70S ribosome.

In terms of biological role, this is one of the proteins that bind and probably mediate the attachment of the 5S RNA into the large ribosomal subunit, where it forms part of the central protuberance. In the 70S ribosome it contacts protein S13 of the 30S subunit (bridge B1b), connecting the 2 subunits; this bridge is implicated in subunit movement. Contacts the P site tRNA; the 5S rRNA and some of its associated proteins might help stabilize positioning of ribosome-bound tRNAs. The protein is Large ribosomal subunit protein uL5 of Salinispora tropica (strain ATCC BAA-916 / DSM 44818 / JCM 13857 / NBRC 105044 / CNB-440).